A 445-amino-acid polypeptide reads, in one-letter code: Glutamate-1-semialdehyde 2,1-aminomutase (445 aa).

The residue at position 263 (K263) is an N6-(pyridoxal phosphate)lysine.

The protein belongs to the class-III pyridoxal-phosphate-dependent aminotransferase family. HemL subfamily. Pyridoxal 5'-phosphate is required as a cofactor.

Its subcellular location is the cytoplasm. It carries out the reaction (S)-4-amino-5-oxopentanoate = 5-aminolevulinate. It functions in the pathway porphyrin-containing compound metabolism; protoporphyrin-IX biosynthesis; 5-aminolevulinate from L-glutamyl-tRNA(Glu): step 2/2. The chain is Glutamate-1-semialdehyde 2,1-aminomutase from Haloarcula marismortui (strain ATCC 43049 / DSM 3752 / JCM 8966 / VKM B-1809) (Halobacterium marismortui).